The following is a 302-amino-acid chain: Oxygen-dependent coproporphyrinogen-III oxidase (302 aa).

Position 94 (Ser94) interacts with substrate. A divalent metal cation contacts are provided by His98 and His108. The Proton donor role is filled by His108. 110 to 112 (NVR) lines the substrate pocket. Residues His147 and His177 each coordinate a divalent metal cation. The segment at 242 to 277 (YVEFNLVYDRGTLFGLQTGGRTESILMSMPPLVRWQ) is important for dimerization. Position 260-262 (260-262 (GGR)) interacts with substrate.

This sequence belongs to the aerobic coproporphyrinogen-III oxidase family. Homodimer. The cofactor is a divalent metal cation.

Its subcellular location is the cytoplasm. The enzyme catalyses coproporphyrinogen III + O2 + 2 H(+) = protoporphyrinogen IX + 2 CO2 + 2 H2O. It functions in the pathway porphyrin-containing compound metabolism; protoporphyrin-IX biosynthesis; protoporphyrinogen-IX from coproporphyrinogen-III (O2 route): step 1/1. Its function is as follows. Involved in the heme biosynthesis. Catalyzes the aerobic oxidative decarboxylation of propionate groups of rings A and B of coproporphyrinogen-III to yield the vinyl groups in protoporphyrinogen-IX. In Shewanella sp. (strain ANA-3), this protein is Oxygen-dependent coproporphyrinogen-III oxidase.